A 210-amino-acid chain; its full sequence is Thymidylate kinase (210 aa).

11 to 18 (GLEGAGKS) lines the ATP pocket.

Belongs to the thymidylate kinase family.

The catalysed reaction is dTMP + ATP = dTDP + ADP. Functionally, phosphorylation of dTMP to form dTDP in both de novo and salvage pathways of dTTP synthesis. The polypeptide is Thymidylate kinase (Histophilus somni (strain 129Pt) (Haemophilus somnus)).